The chain runs to 188 residues: Accessory gene regulator protein B (188 aa).

The next 4 helical transmembrane spans lie at 49–69 (LALLLNIFLYTLIVHLTFLTL), 104–126 (ISFQFLLILSLLSALIVIKYAPA), 143–163 (IKSIIVFVLLMTIACIVPPPY), and 166–186 (FVVYGVLLQSFTLLPIFSIKE).

The protein belongs to the AgrB family.

The protein resides in the cell membrane. Functionally, essential for the production of a quorum sensing system signal molecule, the autoinducing peptide (AIP). This quorum sensing system is responsible for the regulation of the expression of virulence factor genes. Involved in the proteolytic processing of AgrD, the precursor of AIP. The sequence is that of Accessory gene regulator protein B from Staphylococcus intermedius.